Reading from the N-terminus, the 266-residue chain is UPF0354 protein lin1649 (266 aa).

Belongs to the UPF0354 family.

The chain is UPF0354 protein lin1649 from Listeria innocua serovar 6a (strain ATCC BAA-680 / CLIP 11262).